Here is a 58-residue protein sequence, read N- to C-terminus: UPF0391 membrane protein MADE_1011595 (58 aa).

Helical transmembrane passes span 4-24 and 27-47; these read WAIT…GGIA and ATGI…ISLI.

The protein belongs to the UPF0391 family.

It localises to the cell membrane. The protein is UPF0391 membrane protein MADE_1011595 of Alteromonas mediterranea (strain DSM 17117 / CIP 110805 / LMG 28347 / Deep ecotype).